A 425-amino-acid polypeptide reads, in one-letter code: UPF0229 protein ETA_15540 (425 aa).

A disordered region spans residues 60 to 111 (NEPSFHQGRGGERYRVHPGNDHFVQNDRVDRPQGGGAGGSGQGNAGKDGEGQ). The span at 68–90 (RGGERYRVHPGNDHFVQNDRVDR) shows a compositional bias: basic and acidic residues. Over residues 92–105 (QGGGAGGSGQGNAG) the composition is skewed to gly residues.

The protein belongs to the UPF0229 family.

This chain is UPF0229 protein ETA_15540, found in Erwinia tasmaniensis (strain DSM 17950 / CFBP 7177 / CIP 109463 / NCPPB 4357 / Et1/99).